A 474-amino-acid chain; its full sequence is Protein CyaE (474 aa).

Positions 1–31 are cleaved as a signal peptide; sequence MAAVQVRRRGRALALALWAGFALSVGGGVRA.

This sequence belongs to the outer membrane factor (OMF) (TC 1.B.17) family.

The protein localises to the cell outer membrane. Functionally, cyaE is necessary for transport of calmodulin-sensitive adenylate cyclase-hemolysin (cyclolysin). The chain is Protein CyaE (cyaE) from Bordetella pertussis (strain Tohama I / ATCC BAA-589 / NCTC 13251).